Consider the following 748-residue polypeptide: Photosystem I P700 chlorophyll a apoprotein A1 (748 aa).

Transmembrane regions (helical) follow at residues 69-92 (IFSAHFGQLAIIFIWLSGMYFHGA), 155-178 (LYVTALGGLGMAGLMIFAGWFHYH), 194-218 (LNHHLAGLLGLGSLSWAGHQIHVSL), 290-308 (VAHHHLAIAVLFLVAGHMY), 345-368 (WHANLAINLAMLGSLSIIVAHHMY), 384-410 (LSLFTHHMWIGGFCIVGAGAHAAIYMV), 432-454 (AIISHLNWVCIFLGMHSFGLYIH), and 529-547 (FMVHHIHAFTIHVTTLILL). Cys-571 and Cys-580 together coordinate [4Fe-4S] cluster. A run of 2 helical transmembrane segments spans residues 587–608 (HVFLGLFWMYNALSIVIFHFSW) and 662–684 (LSAYGLMFLGAHFVWAFSLMFLF). Residue His-673 coordinates chlorophyll a'. Residues Met-681 and Tyr-689 each contribute to the chlorophyll a site. Position 690 (Trp-690) interacts with phylloquinone. A helical transmembrane segment spans residues 722 to 742 (AVGVAHYLLGGIATTWAFFLA).

The protein belongs to the PsaA/PsaB family. As to quaternary structure, the PsaA/B heterodimer binds the P700 chlorophyll special pair and subsequent electron acceptors. PSI consists of a core antenna complex that captures photons, and an electron transfer chain that converts photonic excitation into a charge separation. The eukaryotic PSI reaction center is composed of at least 11 subunits. The cofactor is P700 is a chlorophyll a/chlorophyll a' dimer, A0 is one or more chlorophyll a, A1 is one or both phylloquinones and FX is a shared 4Fe-4S iron-sulfur center..

Its subcellular location is the plastid. It localises to the chloroplast thylakoid membrane. It catalyses the reaction reduced [plastocyanin] + hnu + oxidized [2Fe-2S]-[ferredoxin] = oxidized [plastocyanin] + reduced [2Fe-2S]-[ferredoxin]. PsaA and PsaB bind P700, the primary electron donor of photosystem I (PSI), as well as the electron acceptors A0, A1 and FX. PSI is a plastocyanin/cytochrome c6-ferredoxin oxidoreductase, converting photonic excitation into a charge separation, which transfers an electron from the donor P700 chlorophyll pair to the spectroscopically characterized acceptors A0, A1, FX, FA and FB in turn. Oxidized P700 is reduced on the lumenal side of the thylakoid membrane by plastocyanin or cytochrome c6. The chain is Photosystem I P700 chlorophyll a apoprotein A1 from Cyanidioschyzon merolae (strain NIES-3377 / 10D) (Unicellular red alga).